Here is a 410-residue protein sequence, read N- to C-terminus: Probable peptidoglycan glycosyltransferase FtsW (410 aa).

Helical transmembrane passes span leucine 39–tyrosine 59, tyrosine 78–phenylalanine 98, phenylalanine 108–valine 128, glycine 177–aspartate 197, phenylalanine 198–asparagine 218, valine 221–proline 241, isoleucine 303–isoleucine 323, glycine 342–valine 362, and leucine 374–leucine 394.

Belongs to the SEDS family. FtsW subfamily.

Its subcellular location is the cell inner membrane. The catalysed reaction is [GlcNAc-(1-&gt;4)-Mur2Ac(oyl-L-Ala-gamma-D-Glu-L-Lys-D-Ala-D-Ala)](n)-di-trans,octa-cis-undecaprenyl diphosphate + beta-D-GlcNAc-(1-&gt;4)-Mur2Ac(oyl-L-Ala-gamma-D-Glu-L-Lys-D-Ala-D-Ala)-di-trans,octa-cis-undecaprenyl diphosphate = [GlcNAc-(1-&gt;4)-Mur2Ac(oyl-L-Ala-gamma-D-Glu-L-Lys-D-Ala-D-Ala)](n+1)-di-trans,octa-cis-undecaprenyl diphosphate + di-trans,octa-cis-undecaprenyl diphosphate + H(+). The protein operates within cell wall biogenesis; peptidoglycan biosynthesis. Functionally, peptidoglycan polymerase that is essential for cell division. In Aromatoleum aromaticum (strain DSM 19018 / LMG 30748 / EbN1) (Azoarcus sp. (strain EbN1)), this protein is Probable peptidoglycan glycosyltransferase FtsW.